A 333-amino-acid chain; its full sequence is Putative ketol-acid reductoisomerase 2 (333 aa).

The KARI N-terminal Rossmann domain maps to 1–182 (MDKTVLDANL…AIPGGIAVIS (182 aa)). The KARI C-terminal knotted domain occupies 183 to 329 (SFEEEALLDL…KELYKLLGRK (147 aa)).

The protein belongs to the ketol-acid reductoisomerase family.

It catalyses the reaction (2R)-2,3-dihydroxy-3-methylbutanoate + NADP(+) = (2S)-2-acetolactate + NADPH + H(+). The catalysed reaction is (2R,3R)-2,3-dihydroxy-3-methylpentanoate + NADP(+) = (S)-2-ethyl-2-hydroxy-3-oxobutanoate + NADPH + H(+). Its pathway is amino-acid biosynthesis; L-isoleucine biosynthesis; L-isoleucine from 2-oxobutanoate: step 2/4. It participates in amino-acid biosynthesis; L-valine biosynthesis; L-valine from pyruvate: step 2/4. The polypeptide is Putative ketol-acid reductoisomerase 2 (ilvC2) (Saccharolobus solfataricus (strain ATCC 35092 / DSM 1617 / JCM 11322 / P2) (Sulfolobus solfataricus)).